The sequence spans 332 residues: Ferredoxin--NADP reductase 2 (332 aa).

Glutamate 37, glutamine 45, tyrosine 50, valine 90, phenylalanine 124, aspartate 285, and threonine 326 together coordinate FAD.

It belongs to the ferredoxin--NADP reductase type 2 family. Homodimer. It depends on FAD as a cofactor.

It carries out the reaction 2 reduced [2Fe-2S]-[ferredoxin] + NADP(+) + H(+) = 2 oxidized [2Fe-2S]-[ferredoxin] + NADPH. The polypeptide is Ferredoxin--NADP reductase 2 (Bacillus pumilus (strain SAFR-032)).